A 317-amino-acid chain; its full sequence is Acetyl-coenzyme A carboxylase carboxyl transferase subunit alpha (317 aa).

In terms of domain architecture, CoA carboxyltransferase C-terminal spans 38–292 (TLEERLARLE…DNIIKQSLVE (255 aa)).

Belongs to the AccA family. Acetyl-CoA carboxylase is a heterohexamer composed of biotin carboxyl carrier protein (AccB), biotin carboxylase (AccC) and two subunits each of ACCase subunit alpha (AccA) and ACCase subunit beta (AccD).

It is found in the cytoplasm. It catalyses the reaction N(6)-carboxybiotinyl-L-lysyl-[protein] + acetyl-CoA = N(6)-biotinyl-L-lysyl-[protein] + malonyl-CoA. The protein operates within lipid metabolism; malonyl-CoA biosynthesis; malonyl-CoA from acetyl-CoA: step 1/1. In terms of biological role, component of the acetyl coenzyme A carboxylase (ACC) complex. First, biotin carboxylase catalyzes the carboxylation of biotin on its carrier protein (BCCP) and then the CO(2) group is transferred by the carboxyltransferase to acetyl-CoA to form malonyl-CoA. This is Acetyl-coenzyme A carboxylase carboxyl transferase subunit alpha from Oceanobacillus iheyensis (strain DSM 14371 / CIP 107618 / JCM 11309 / KCTC 3954 / HTE831).